Here is a 202-residue protein sequence, read N- to C-terminus: Sperm-specific H1/protamine-like protein type 1 (202 aa).

Basic residues predominate over residues 1-35; it reads MPSPSRKSRSRSRSRSKSPKRSPAKKARKTPKKPR. Disordered stretches follow at residues 1 to 46 and 104 to 202; these read MPSP…PTTL and KTSA…QFAL. The region spanning 41–120 is the H15 domain; that stretch reads KKPTTLSMIV…GATGSFRVGK (80 aa). Residues 126-156 are compositionally biased toward basic residues; it reads KKAKKAKSPKKKSSKKSKNKSNNAKAKKSPK. Residues 177-187 show a composition bias toward low complexity; sequence GARYPFRYQAY.

In terms of processing, OE1 and OE3 are produced by post-translational cleavage of a common precursor. In terms of tissue distribution, sperm.

It localises to the nucleus. Its subcellular location is the chromosome. Functionally, linker histones are implicated in chromatin remodeling and/or transcriptional regulation during spermiogenesis, the process of spermatid maturation into spermatozoa. Protamines substitute for histones in the chromatin of sperm during the haploid phase of spermatogenesis. They compact sperm DNA into a highly condensed, stable and inactive complex. This chain is Sperm-specific H1/protamine-like protein type 1, found in Ostrea edulis (Native oyster).